The chain runs to 2128 residues: Non-reducing polyketide synthase albA (2128 aa).

Positions 8 to 244 are N-terminal acylcarrier protein transacylase domain (SAT); it reads YLFGDQTSDI…VKAPIHGPYH (237 aa). The 432-residue stretch at 375–806 folds into the Ketosynthase family 3 (KS3) domain; that stretch reads NSKIAIIGMS…GGNTALLLED (432 aa). Active-site for beta-ketoacyl synthase activity residues include cysteine 547, histidine 682, and histidine 724. Residues 912 to 1232 form a malonyl-CoA:ACP transacylase (MAT) domain region; sequence FVFTGQGAQY…LASLHLAGID (321 aa). Catalysis depends on serine 1001, which acts as the For acyl/malonyl transferase activity. An N-terminal hotdog fold region spans residues 1286-1425; that stretch reads HEYLTTAAQK…CTVRFFDCAA (140 aa). The 313-residue stretch at 1286–1598 folds into the PKS/mFAS DH domain; it reads HEYLTTAAQK…FQALSRKILD (313 aa). The product template (PT) domain stretch occupies residues 1290-1603; that stretch reads TTAAQKVIET…RKILDTVLPP (314 aa). Residue histidine 1326 is the Proton acceptor; for dehydratase activity of the active site. The interval 1452 to 1598 is C-terminal hotdog fold; the sequence is DAHRLGRGMV…FQALSRKILD (147 aa). The active-site Proton donor; for dehydratase activity is aspartate 1511. The region spanning 1618-1695 is the Carrier 1 domain; sequence PSAPSLVKRA…DFKQFLAPMS (78 aa). An O-(pantetheine 4'-phosphoryl)serine modification is found at serine 1655. The disordered stretch occupies residues 1695–1740; it reads SQGEASDGSTSDPESSSSFNGGSSTDESSAGSPVSSPPNEKVTQVE. Positions 1700–1723 are enriched in low complexity; that stretch reads SDGSTSDPESSSSFNGGSSTDESS. A compositionally biased stretch (polar residues) spans 1724–1740; that stretch reads AGSPVSSPPNEKVTQVE. The Carrier 2 domain maps to 1739 to 1816; the sequence is VEQHATIKEI…DVEDALGLKP (78 aa). Serine 1776 carries the post-translational modification O-(pantetheine 4'-phosphoryl)serine. A claisen cyclase domain region spans residues 1854–2126; that stretch reads SPHPRSTSIL…ELGSFIGNAM (273 aa). Catalysis depends on serine 1944, which acts as the For Claisen cyclase activity.

The enzyme catalyses 6 malonyl-CoA + acetyl-CoA + 6 H(+) = naphtopyrone YWA1 + 6 CO2 + 7 CoA + H2O. Its pathway is secondary metabolite biosynthesis. Its function is as follows. Non-reducing polyketide synthase; part of the gene cluster that mediates the biosynthesis of aurasperone B, a dimeric gamma-naphthopyrone. The first step in the biosynthesis of aurasperone B is the production of gamma-naphthopyrone precursor YWA1 by the non-reducing polyketide synthase albA, via condensation of one acetyl-CoA starter unit with 6 malonyl-CoA units. YWA1 is then methylated by aunE at position C-6 to yield foncesin which is further methylated at position C-8 by aunD to produce fonsecin B. A key enzyme in the biosynthetic pathway is the cytochrome P450 monooxygenase aunB which catalyzes the oxidative dimerization of fonsecin B to aurasperone B. AunB also catalyzes the oxidative dimerization of rubrofusarin B into aurasperone A. In Aspergillus niger (strain ATCC 1015 / CBS 113.46 / FGSC A1144 / LSHB Ac4 / NCTC 3858a / NRRL 328 / USDA 3528.7), this protein is Non-reducing polyketide synthase albA.